The following is a 263-amino-acid chain: Ribosomal RNA small subunit methyltransferase J (263 aa).

Residues 108–109 (RD), 124–125 (ER), and Asp178 contribute to the S-adenosyl-L-methionine site.

The protein belongs to the methyltransferase superfamily. RsmJ family.

It is found in the cytoplasm. The catalysed reaction is guanosine(1516) in 16S rRNA + S-adenosyl-L-methionine = N(2)-methylguanosine(1516) in 16S rRNA + S-adenosyl-L-homocysteine + H(+). Its function is as follows. Specifically methylates the guanosine in position 1516 of 16S rRNA. The sequence is that of Ribosomal RNA small subunit methyltransferase J from Idiomarina loihiensis (strain ATCC BAA-735 / DSM 15497 / L2-TR).